A 595-amino-acid polypeptide reads, in one-letter code: Ketol-acid reductoisomerase, chloroplastic (595 aa).

The N-terminal 72 residues, 1–72 (MAATAATTFS…GGGSALSAQM (72 aa)), are a transit peptide targeting the chloroplast. The 199-residue stretch at 108–306 (VRGGRNLFPL…ALGSPFTFAT (199 aa)) folds into the KARI N-terminal Rossmann domain. NADP(+) is bound by residues 129–136 (GVIGWGSQ), 162–167 (RKGSNS), and 201–205 (SDSAQ). Residue His226 is part of the active site. KARI C-terminal knotted domains are found at residues 307–455 (TLEQ…RPAG) and 456–592 (DLGP…RPEL). Positions 315, 319, 492, and 496 each coordinate Mg(2+). Residue Ser518 participates in substrate binding.

This sequence belongs to the ketol-acid reductoisomerase family. As to quaternary structure, homodimer. It depends on Mg(2+) as a cofactor.

It is found in the plastid. The protein resides in the chloroplast. The enzyme catalyses (2R)-2,3-dihydroxy-3-methylbutanoate + NADP(+) = (2S)-2-acetolactate + NADPH + H(+). It catalyses the reaction (2R,3R)-2,3-dihydroxy-3-methylpentanoate + NADP(+) = (S)-2-ethyl-2-hydroxy-3-oxobutanoate + NADPH + H(+). It functions in the pathway amino-acid biosynthesis; L-isoleucine biosynthesis; L-isoleucine from 2-oxobutanoate: step 2/4. It participates in amino-acid biosynthesis; L-valine biosynthesis; L-valine from pyruvate: step 2/4. This Spinacia oleracea (Spinach) protein is Ketol-acid reductoisomerase, chloroplastic (AHRI).